The following is a 30-amino-acid chain: Cyclotide hyen-C (30 aa).

The segment at residues 1-30 (GTHPCQETCVTSTRCSTQGCHCNWPICFKN) is a cross-link (cyclopeptide (Gly-Asn)). Intrachain disulfides connect cysteine 5/cysteine 20, cysteine 9/cysteine 22, and cysteine 15/cysteine 27.

Post-translationally, this is a cyclic peptide. Detected in stems (at protein level).

Its function is as follows. Probably participates in a plant defense mechanism. Does not display any cytotoxic activity towards K562, HeLa, MCF-7, HUVEC or red blood cells. Does not bind to phospholipd membranes containing 1-palmitoyl 2-oleoyl phosphatidylcholine (POPC) or 1-palmitoyl-2-oleophosphatidylethanolamine (POPE). In Pigea enneasperma (Spade flower), this protein is Cyclotide hyen-C.